The sequence spans 262 residues: Lectin (262 aa).

The signal sequence occupies residues 1-21 (MASSVLLVLSLFLVLLLTQAS). N53, N82, N100, N129, and N205 each carry an N-linked (GlcNAc...) asparagine glycan.

The protein belongs to the leguminous lectin family.

Functionally, this metalloglycoprotein, containing Ca(2+), Mn(2+), binds glycoconjugates containing terminal non-reducing alpha-D-GalNAc residues. This chain is Lectin, found in Phaseolus lunatus (Lima bean).